We begin with the raw amino-acid sequence, 306 residues long: Glutaminase (306 aa).

Substrate contacts are provided by Ser-61, Asn-111, Glu-157, Asn-164, Tyr-188, Tyr-240, and Val-258.

The protein belongs to the glutaminase family. Homotetramer.

It catalyses the reaction L-glutamine + H2O = L-glutamate + NH4(+). The polypeptide is Glutaminase (Pseudoalteromonas atlantica (strain T6c / ATCC BAA-1087)).